The following is a 259-amino-acid chain: MINPIAFKLGPLSLHWYAVCILVGLLLAVYLAAKEAPRKKMTSDDIIDFILIAFPLAIIGARIYYVAFEWSYYSQHLSDIFAIWNGGIAIYGGLITGTIVLFVYCYYKVLNPIHFLDIAAPSVMLAQAIGRWGNFFNQEAYGKAVSQLNYLPSFIRQQMFIDGSYRVPTFLYESMWNLIGFVIIMVWRRKPRSLLDGDILSFYLIWYGCGRLVIEGMRTDSLMLLGIRVSQYVSVLLIVIAIVFIFKRHRQKGISYYQE.

The next 4 membrane-spanning stretches (helical) occupy residues 12 to 32, 46 to 66, 83 to 103, and 109 to 129; these read LSLH…VYLA, IIDF…IYYV, IWNG…VLFV, and VLNP…AQAI. Arg-131 provides a ligand contact to a 1,2-diacyl-sn-glycero-3-phospho-(1'-sn-glycerol). Helical transmembrane passes span 167–187, 194–214, and 226–246; these read VPTF…IMVW, LLDG…RLVI, and GIRV…VFIF.

Belongs to the Lgt family.

It localises to the cell membrane. It catalyses the reaction L-cysteinyl-[prolipoprotein] + a 1,2-diacyl-sn-glycero-3-phospho-(1'-sn-glycerol) = an S-1,2-diacyl-sn-glyceryl-L-cysteinyl-[prolipoprotein] + sn-glycerol 1-phosphate + H(+). Its pathway is protein modification; lipoprotein biosynthesis (diacylglyceryl transfer). Its function is as follows. Catalyzes the transfer of the diacylglyceryl group from phosphatidylglycerol to the sulfhydryl group of the N-terminal cysteine of a prolipoprotein, the first step in the formation of mature lipoproteins. In Streptococcus equi subsp. zooepidemicus (strain MGCS10565), this protein is Phosphatidylglycerol--prolipoprotein diacylglyceryl transferase.